Consider the following 1703-residue polypeptide: Stress response protein NST1 (1703 aa).

Disordered stretches follow at residues 1 to 91 (MAKS…AKDA), 243 to 288 (DQPL…PLPP), 347 to 484 (HALR…IWST), 566 to 724 (VSSG…GLGS), 759 to 807 (MHRE…EQRM), 843 to 1292 (LREL…LGAP), 1353 to 1407 (FSPM…IGPI), 1424 to 1465 (HTGA…DIID), 1516 to 1537 (SSFS…NGGG), 1558 to 1581 (ASTP…PWAR), 1595 to 1637 (EQPG…HHQL), and 1672 to 1703 (GAPG…GSHE). Over residues 7 to 36 (PRSTPAARAAAVPPPRLAAAAQQQHHQQQP) the composition is skewed to low complexity. The segment covering 37-48 (PSTPPAPVPPTK) has biased composition (pro residues). Residues 57-66 (PPRSASPVSN) show a composition bias toward polar residues. Positions 77 to 86 (AKKKKKKSKS) are enriched in basic residues. Over residues 253–273 (NTANNAHPTNVNGAYGQYSSS) the composition is skewed to polar residues. The span at 274-288 (PNPPPTQPPVEPLPP) shows a compositional bias: pro residues. Residues 365–376 (SKNKKKKKKKKG) show a composition bias toward basic residues. Residues 384 to 393 (HGDDEAHEIE) are compositionally biased toward basic and acidic residues. The span at 396-409 (VPPPKPVPNHPPPS) shows a compositional bias: pro residues. Low complexity-rich tracts occupy residues 410-419 (TNVSSVARNS) and 453-464 (SSNSGKRSVSSS). The span at 572–581 (IPPPPGPGPF) shows a compositional bias: pro residues. The segment covering 614–650 (THTHTHAHTHTHTHTHTHTHTHAHQHPHPHPHGRKAS) has biased composition (basic residues). The segment covering 657–690 (DGYDDDELDDDAEYDDDDDDADYDDEDEDDDVEL) has biased composition (acidic residues). The span at 691–703 (EKERAREDYDKRN) shows a compositional bias: basic and acidic residues. Positions 748–1031 (LEMMEQLAER…AKQAAAAASR (284 aa)) form a coiled coil. The segment covering 771 to 802 (ASDDEDDVDGPDDVDDEDLDEEDEDEEDEILT) has biased composition (acidic residues). Basic and acidic residues-rich tracts occupy residues 853–866 (EKAR…ESQK), 874–896 (QREA…EAEV), and 904–1023 (RDAE…REAK). Composition is skewed to low complexity over residues 1024-1037 (QAAA…SAAQ) and 1111-1135 (AGGL…AVGS). Over residues 1138 to 1148 (PAPPQGLPPRP) the composition is skewed to pro residues. Over residues 1158–1167 (SSSQTSSVSV) the composition is skewed to low complexity. A compositionally biased stretch (polar residues) spans 1200 to 1219 (LNAQSNVPMPSAKTPGSSIS). Over residues 1269-1291 (QNSGMFGSNGSMSSSLQSPSLGA) the composition is skewed to low complexity. Positions 1431–1444 (GRSSSTTSGSGATS) are enriched in low complexity. Over residues 1598–1619 (GGNGVGAGSNGGTPSGLGGIGG) the composition is skewed to gly residues.

This sequence belongs to the NST1 family.

Its subcellular location is the cytoplasm. May act as a negative regulator of salt tolerance. This chain is Stress response protein NST1 (NST1), found in Mycosarcoma maydis (Corn smut fungus).